Here is a 118-residue protein sequence, read N- to C-terminus: Small ribosomal subunit protein bS6 (118 aa).

The protein belongs to the bacterial ribosomal protein bS6 family.

Functionally, binds together with bS18 to 16S ribosomal RNA. In Parabacteroides distasonis (strain ATCC 8503 / DSM 20701 / CIP 104284 / JCM 5825 / NCTC 11152), this protein is Small ribosomal subunit protein bS6.